An 86-amino-acid polypeptide reads, in one-letter code: Mitochondrial import inner membrane translocase subunit Tim10 (86 aa).

The short motif at 29–54 (CQAKCIATAFKESELTKGEAVCLDRC) is the Twin CX3C motif element. 2 disulfides stabilise this stretch: Cys-29-Cys-54 and Cys-33-Cys-50.

It belongs to the small Tim family. In terms of assembly, heterohexamer; composed of 3 copies of tim-9/tin-9.1 and 3 copies of tim-10/tin-10, named soluble 70 kDa complex. The complex associates with the tim-22 component of the TIM22 complex. Interacts with multi-pass transmembrane proteins in transit.

The protein localises to the mitochondrion inner membrane. Its function is as follows. Mitochondrial intermembrane chaperone that participates in the import and insertion of multi-pass transmembrane proteins into the mitochondrial inner membrane. May also be required for the transfer of beta-barrel precursors from the TOM complex to the sorting and assembly machinery (SAM complex) of the outer membrane. Acts as a chaperone-like protein that protects the hydrophobic precursors from aggregation and guide them through the mitochondrial intermembrane space. The polypeptide is Mitochondrial import inner membrane translocase subunit Tim10 (tin-10) (Caenorhabditis briggsae).